A 513-amino-acid chain; its full sequence is ATP synthase subunit alpha (513 aa).

Residue 170–177 coordinates ATP; that stretch reads GDRQTGKT.

Belongs to the ATPase alpha/beta chains family. As to quaternary structure, F-type ATPases have 2 components, CF(1) - the catalytic core - and CF(0) - the membrane proton channel. CF(1) has five subunits: alpha(3), beta(3), gamma(1), delta(1), epsilon(1). CF(0) has four main subunits: a(1), b(1), b'(1) and c(9-12).

The protein resides in the cell inner membrane. The catalysed reaction is ATP + H2O + 4 H(+)(in) = ADP + phosphate + 5 H(+)(out). Functionally, produces ATP from ADP in the presence of a proton gradient across the membrane. The alpha chain is a regulatory subunit. In Gloeobacter violaceus (strain ATCC 29082 / PCC 7421), this protein is ATP synthase subunit alpha.